The sequence spans 505 residues: Putative pentatricopeptide repeat-containing protein At1g26500 (505 aa).

PPR repeat units follow at residues 145–179 (NDKTFRIVLKTLASARELKKCVNYFHLMNGFGYLY), 180–210 (NVETMNRGVETLCKEKLVEEAKFVFIKLKEF), 214–248 (DEITYRTMIQGFCDVGDLIEAAKLWNLMMDEGFDV), 249–279 (DIEAGKKIMETLLKKNQFDEASKVFYVMVSK), 285–319 (DGGFYRVMIDWLCKNGRIDMARKVFDEMRERGVYV), 320–350 (DNLTWASLIYGLLVKRRVVEAYGLVEGVENP), and 351–385 (DISIYHGLIKGLVKIKRASEATEVFRKMIQRGCEP).

Belongs to the PPR family. P subfamily.

In Arabidopsis thaliana (Mouse-ear cress), this protein is Putative pentatricopeptide repeat-containing protein At1g26500.